The sequence spans 245 residues: Tetraspanin-6 (245 aa).

Residues 1 to 19 are Cytoplasmic-facing; that stretch reads MASPSRRLQTKPVITCFKS. Residues 20–40 form a helical membrane-spanning segment; it reads VLLIYTFIFWITGVILLAVGI. At 41–59 the chain is on the extracellular side; that stretch reads WGKVSLENYFSLLNEKATN. The helical transmembrane segment at 60–80 threads the bilayer; that stretch reads VPFVLIGTGTVIILLGTFGCF. Over 81-93 the chain is Cytoplasmic; that stretch reads ATCRASAWMLKLY. Residues 94–114 form a helical membrane-spanning segment; that stretch reads AMFLTLIFLVELVAAIIGFVF. The Extracellular segment spans residues 115–208; sequence RHEIKNSLKN…IMVMTIIESE (94 aa). An N-linked (GlcNAc...) asparagine glycan is attached at Asn134. The helical transmembrane segment at 209–229 threads the bilayer; the sequence is MGVVAGISFGVACFQLIGIFL. The Cytoplasmic portion of the chain corresponds to 230 to 245; that stretch reads AYCLSRAITNNQYEIV.

This sequence belongs to the tetraspanin (TM4SF) family.

It localises to the membrane. This chain is Tetraspanin-6 (TSPAN6), found in Bos taurus (Bovine).